The primary structure comprises 97 residues: Putative septation protein SpoVG (97 aa).

It belongs to the SpoVG family.

In terms of biological role, essential for sporulation. Interferes with or is a negative regulator of the pathway leading to asymmetric septation. In Bacillus velezensis (strain DSM 23117 / BGSC 10A6 / LMG 26770 / FZB42) (Bacillus amyloliquefaciens subsp. plantarum), this protein is Putative septation protein SpoVG.